The primary structure comprises 286 residues: Flagellar filament 33 kDa core protein (286 aa).

Belongs to the bacterial flagellin family. As to quaternary structure, the flagellum consists of an outer layer composed of repeating units of FlaA around a core that contains several antigenically related polypeptides.

The protein localises to the periplasmic flagellum. It is found in the periplasm. In terms of biological role, component of the core of the flagella. The polypeptide is Flagellar filament 33 kDa core protein (Treponema phagedenis).